The primary structure comprises 161 residues: Nucleotide-binding protein Bamb_2603 (161 aa).

This sequence belongs to the YajQ family.

Functionally, nucleotide-binding protein. The protein is Nucleotide-binding protein Bamb_2603 of Burkholderia ambifaria (strain ATCC BAA-244 / DSM 16087 / CCUG 44356 / LMG 19182 / AMMD) (Burkholderia cepacia (strain AMMD)).